We begin with the raw amino-acid sequence, 473 residues long: Ribosomal protein uS12 methylthiotransferase RimO (473 aa).

One can recognise an MTTase N-terminal domain in the interval 30–141; that stretch reads ASVAVLHLGC…IVQIIERVER (112 aa). [4Fe-4S] cluster contacts are provided by Cys-39, Cys-75, Cys-104, Cys-179, Cys-183, and Cys-186. The region spanning 165-394 is the Radical SAM core domain; sequence TTHAPVAYLR…MQVQQGITFR (230 aa). The TRAM domain occupies 397–463; it reads REQVGRVVPV…PYDLFGQVVA (67 aa).

It belongs to the methylthiotransferase family. RimO subfamily. [4Fe-4S] cluster is required as a cofactor.

It localises to the cytoplasm. The catalysed reaction is L-aspartate(89)-[ribosomal protein uS12]-hydrogen + (sulfur carrier)-SH + AH2 + 2 S-adenosyl-L-methionine = 3-methylsulfanyl-L-aspartate(89)-[ribosomal protein uS12]-hydrogen + (sulfur carrier)-H + 5'-deoxyadenosine + L-methionine + A + S-adenosyl-L-homocysteine + 2 H(+). Functionally, catalyzes the methylthiolation of an aspartic acid residue of ribosomal protein uS12. This is Ribosomal protein uS12 methylthiotransferase RimO from Synechococcus sp. (strain JA-2-3B'a(2-13)) (Cyanobacteria bacterium Yellowstone B-Prime).